The primary structure comprises 433 residues: Leucine-rich repeat extensin-like protein 7 (433 aa).

Residues 1-21 form the signal peptide; sequence MRIYQPTLLIFTTVVLLSISA. The N-linked (GlcNAc...) asparagine glycan is linked to Asn-71. LRR repeat units lie at residues 98-122, 123-145, 146-170, 171-194, 196-217, 219-239, 241-265, 266-289, and 290-313; these read VKTV…LGLL, TDIA…GFSQ, LSLL…VIGL, PKLK…LFDK, LDAL…MGNS, VSVL…SFGK, GKTL…MGLL, QNVT…MGQM, and ENLE…LCSL. Asn-267 carries an N-linked (GlcNAc...) asparagine glycan. Asn-340 is a glycosylation site (N-linked (GlcNAc...) asparagine). A disordered region spans residues 380–433; that stretch reads FSPPPSQISPSSQPLAPAPSPTSPPLSTPPPARPCPPVYSPPPPPPLSLAPSMN. The tract at residues 381–433 is contains the Ser-Pro(4) repeats; the sequence is SPPPSQISPSSQPLAPAPSPTSPPLSTPPPARPCPPVYSPPPPPPLSLAPSMN. A compositionally biased stretch (pro residues) spans 395–427; that stretch reads APAPSPTSPPLSTPPPARPCPPVYSPPPPPPLS.

Post-translationally, hydroxylated on proline residues in the S-P-P-P-P repeat. O-glycosylated on hydroxyprolines. Expressed in flowers and pollen.

It localises to the secreted. The protein localises to the cell wall. Its function is as follows. Modulates cell morphogenesis by regulating cell wall formation and assembly, and/or growth polarization. This Arabidopsis thaliana (Mouse-ear cress) protein is Leucine-rich repeat extensin-like protein 7 (LRX7).